A 398-amino-acid chain; its full sequence is Dual specificity mitogen-activated protein kinase kinase 2 (398 aa).

The segment at 1–29 (MPAKRKPVLPALTITPSPAEGPGPGGSAE) is disordered. The Protein kinase domain maps to 70–367 (FERISELGAG…LKMLMNHTFI (298 aa)). ATP contacts are provided by residues 76-84 (LGAGNGGVV) and Lys99. Asp192 (proton acceptor) is an active-site residue. Ser220 and Ser224 each carry phosphoserine; by RAF.

The protein belongs to the protein kinase superfamily. STE Ser/Thr protein kinase family. MAP kinase kinase subfamily. In terms of processing, activated by phosphorylation on Ser/Thr catalyzed by MAP kinase kinase kinases (RAF).

It carries out the reaction L-seryl-[protein] + ATP = O-phospho-L-seryl-[protein] + ADP + H(+). The catalysed reaction is L-threonyl-[protein] + ATP = O-phospho-L-threonyl-[protein] + ADP + H(+). It catalyses the reaction L-tyrosyl-[protein] + ATP = O-phospho-L-tyrosyl-[protein] + ADP + H(+). Its function is as follows. Catalyzes the concomitant phosphorylation of a threonine and a tyrosine residue in a Thr-Glu-Tyr sequence located in MAP kinases. Activates the ERK1 and ERK2 MAP kinases. This Gallus gallus (Chicken) protein is Dual specificity mitogen-activated protein kinase kinase 2 (MAP2K2).